A 224-amino-acid polypeptide reads, in one-letter code: UPF0758 protein AFE_0358 (224 aa).

An MPN domain is found at 102-224 (GLDSPLRVRQ…PLSLREQGGW (123 aa)). Residues His-173, His-175, and Asp-186 each coordinate Zn(2+). The short motif at 173–186 (HNHPSGVAEPSAAD) is the JAMM motif element.

This sequence belongs to the UPF0758 family.

This Acidithiobacillus ferrooxidans (strain ATCC 23270 / DSM 14882 / CIP 104768 / NCIMB 8455) (Ferrobacillus ferrooxidans (strain ATCC 23270)) protein is UPF0758 protein AFE_0358.